We begin with the raw amino-acid sequence, 948 residues long: Putative helicase 009L (948 aa).

The region spanning 64–243 is the Helicase ATP-binding domain; that stretch reads LSEDTPYREL…ADVLNLILPQ (180 aa). 77–84 contributes to the ATP binding site; that stretch reads HAPGTGKT. The DEAH box signature appears at 187–190; sequence DEVH. Positions 371–554 constitute a Helicase C-terminal domain; that stretch reads VKYDYLVRVA…AVERILMTSA (184 aa).

The polypeptide is Putative helicase 009L (Frog virus 3 (isolate Goorha) (FV-3)).